A 203-amino-acid polypeptide reads, in one-letter code: Membrane-spanning 4-domains subfamily A member 13 (203 aa).

Helical transmembrane passes span 15–35 (VLGV…YFLL), 56–76 (MGTS…VKAA), 84–104 (ILCT…AASL), and 141–161 (FAIA…SSIV).

Belongs to the MS4A family.

It localises to the membrane. Its function is as follows. May be involved in signal transduction as a component of a multimeric receptor complex. This is Membrane-spanning 4-domains subfamily A member 13 (Ms4a13) from Mus musculus (Mouse).